The following is a 493-amino-acid chain: Glutamyl-tRNA(Gln) amidotransferase subunit A (493 aa).

Active-site charge relay system residues include Lys-79 and Ser-159. Ser-183 acts as the Acyl-ester intermediate in catalysis.

The protein belongs to the amidase family. GatA subfamily. Heterotrimer of A, B and C subunits.

It carries out the reaction L-glutamyl-tRNA(Gln) + L-glutamine + ATP + H2O = L-glutaminyl-tRNA(Gln) + L-glutamate + ADP + phosphate + H(+). In terms of biological role, allows the formation of correctly charged Gln-tRNA(Gln) through the transamidation of misacylated Glu-tRNA(Gln) in organisms which lack glutaminyl-tRNA synthetase. The reaction takes place in the presence of glutamine and ATP through an activated gamma-phospho-Glu-tRNA(Gln). The protein is Glutamyl-tRNA(Gln) amidotransferase subunit A of Brucella suis biovar 1 (strain 1330).